Consider the following 190-residue polypeptide: Elongation factor P-like protein (190 aa).

The protein belongs to the elongation factor P family.

The protein is Elongation factor P-like protein of Citrobacter koseri (strain ATCC BAA-895 / CDC 4225-83 / SGSC4696).